A 195-amino-acid chain; its full sequence is 2-hydroxychromene-2-carboxylate isomerase (195 aa).

Ser-13 (nucleophile) is an active-site residue. Glutathione is bound at residue Ser-13. Substrate-binding positions include Lys-45 and 55-56 (NR). Residue 181–184 (WGND) coordinates glutathione.

It belongs to the GST superfamily. NadH family. Glutathione serves as cofactor.

The catalysed reaction is 2-hydroxychromene-2-carboxylate = (3E)-4-(2-hydroxyphenyl)-2-oxobut-3-enoate. Its activity is regulated as follows. Activated by salicylate. Functionally, involved in the naphthalene and naphthalenesulfonate catabolic pathway. Catalyzes the reversible glutathione-dependent isomerization of 2-hydroxychromene-2-carboxylate (HCCA) to trans-O-hydroxybenzylidenepyruvate (THBPA). It can also use 2-hydroxybenzo[g]chromene-2-carboxylate as substrate. The chain is 2-hydroxychromene-2-carboxylate isomerase (nsaD) from Sphingobium xenophagum.